A 399-amino-acid polypeptide reads, in one-letter code: Argininosuccinate synthase (399 aa).

Residue 9–17 participates in ATP binding; it reads AYSGGLDTS. Tyr-85 serves as a coordination point for L-citrulline. Residue Gly-115 coordinates ATP. Residues Thr-117, Asn-121, and Asp-122 each contribute to the L-aspartate site. Asn-121 contributes to the L-citrulline binding site. Arg-125, Ser-173, Glu-258, and Tyr-270 together coordinate L-citrulline.

Belongs to the argininosuccinate synthase family. Type 1 subfamily. Homotetramer.

The protein resides in the cytoplasm. It carries out the reaction L-citrulline + L-aspartate + ATP = 2-(N(omega)-L-arginino)succinate + AMP + diphosphate + H(+). It participates in amino-acid biosynthesis; L-arginine biosynthesis; L-arginine from L-ornithine and carbamoyl phosphate: step 2/3. This chain is Argininosuccinate synthase, found in Streptococcus thermophilus (strain CNRZ 1066).